Consider the following 528-residue polypeptide: Chaperonin GroEL, chloroplastic (528 aa).

ATP contacts are provided by residues Thr29–Pro32, Asp86–Thr90, Gly414, and Asp496.

The protein belongs to the chaperonin (HSP60) family. Forms a cylinder of 14 subunits composed of two heptameric rings stacked back-to-back. Interacts with the co-chaperonin GroES.

The protein resides in the plastid. It is found in the chloroplast. It catalyses the reaction ATP + H2O + a folded polypeptide = ADP + phosphate + an unfolded polypeptide.. Functionally, together with its co-chaperonin GroES, plays an essential role in assisting protein folding. The GroEL-GroES system forms a nano-cage that allows encapsulation of the non-native substrate proteins and provides a physical environment optimized to promote and accelerate protein folding. The polypeptide is Chaperonin GroEL, chloroplastic (Porphyra purpurea (Red seaweed)).